We begin with the raw amino-acid sequence, 178 residues long: Arginine repressor (178 aa).

Positions M1–A20 are disordered.

The protein belongs to the ArgR family.

It is found in the cytoplasm. It participates in amino-acid biosynthesis; L-arginine biosynthesis [regulation]. In terms of biological role, regulates arginine biosynthesis genes. The sequence is that of Arginine repressor from Streptomyces griseus subsp. griseus (strain JCM 4626 / CBS 651.72 / NBRC 13350 / KCC S-0626 / ISP 5235).